The sequence spans 286 residues: Shikimate dehydrogenase (NADP(+)) (286 aa).

Shikimate is bound by residues 22 to 24 and Thr71; that span reads SRS. Lys75 (proton acceptor) is an active-site residue. Position 87 (Glu87) interacts with NADP(+). Shikimate-binding residues include Asn96 and Asp111. NADP(+) contacts are provided by residues 136–140, 160–165, and Ile225; these read GAGGA and NRTVER. Tyr227 is a shikimate binding site. Position 248 (Gly248) interacts with NADP(+).

The protein belongs to the shikimate dehydrogenase family. As to quaternary structure, homodimer.

The enzyme catalyses shikimate + NADP(+) = 3-dehydroshikimate + NADPH + H(+). It functions in the pathway metabolic intermediate biosynthesis; chorismate biosynthesis; chorismate from D-erythrose 4-phosphate and phosphoenolpyruvate: step 4/7. Involved in the biosynthesis of the chorismate, which leads to the biosynthesis of aromatic amino acids. Catalyzes the reversible NADPH linked reduction of 3-dehydroshikimate (DHSA) to yield shikimate (SA). This chain is Shikimate dehydrogenase (NADP(+)), found in Rhizobium rhizogenes (strain K84 / ATCC BAA-868) (Agrobacterium radiobacter).